The chain runs to 782 residues: Small RNA degrading nuclease 3 (782 aa).

Residues 145–296 (MLSIDCEMVT…HDAAAAMKLV (152 aa)) enclose the Exonuclease domain. One can recognise an RRM 1 domain in the interval 331-410 (AQLFLHKIPH…KKAVLKLSSG (80 aa)). A disordered region spans residues 426–464 (PCEISTSERARAEENNVSSKRQKTEDETEETKEATVNQR). One can recognise an RRM 2 domain in the interval 469-549 (TKLFLHKIPH…KMVVFKLSSG (81 aa)). A disordered region spans residues 563-605 (DSPGEISTTKRARTEESNMSSKRQKTEDESEETKEANAKQREA). The stretch at 577 to 605 (EESNMSSKRQKTEDESEETKEANAKQREA) forms a coiled coil. The span at 595 to 605 (TKEANAKQREA) shows a compositional bias: basic and acidic residues. The 81-residue stretch at 608 to 688 (TKLLLHKIPL…KMVAFKLSSG (81 aa)) folds into the RRM 3 domain. Residues 709–779 (ANANHCEDDH…KMKLEKKQSK (71 aa)) adopt a coiled-coil conformation.

Belongs to the REXO1/REXO3 family. In terms of assembly, associated with the Mediator complex.

Its subcellular location is the nucleus. 3'-5' exonuclease degrading single-stranded small RNAs. In Arabidopsis thaliana (Mouse-ear cress), this protein is Small RNA degrading nuclease 3 (SDN3).